Reading from the N-terminus, the 485-residue chain is Adenosylhomocysteinase (485 aa).

Substrate contacts are provided by T64, D139, and E205. Residue 206–208 (TTT) participates in NAD(+) binding. Residues K235 and D239 each coordinate substrate. NAD(+)-binding positions include N240, 269–274 (GYGDVG), E292, N327, and 348–350 (IGH).

This sequence belongs to the adenosylhomocysteinase family. Homotetramer. The cofactor is NAD(+).

The catalysed reaction is S-adenosyl-L-homocysteine + H2O = L-homocysteine + adenosine. It functions in the pathway amino-acid biosynthesis; L-homocysteine biosynthesis; L-homocysteine from S-adenosyl-L-homocysteine: step 1/1. Adenosylhomocysteine is a competitive inhibitor of S-adenosyl-L-methionine-dependent methyl transferase reactions; therefore adenosylhomocysteinase may play a key role in the control of methylations via regulation of the intracellular concentration of adenosylhomocysteine. The chain is Adenosylhomocysteinase (SAHH) from Mesembryanthemum crystallinum (Common ice plant).